Reading from the N-terminus, the 153-residue chain is Ribosome maturation factor RimP (153 aa).

Belongs to the RimP family.

The protein localises to the cytoplasm. In terms of biological role, required for maturation of 30S ribosomal subunits. The sequence is that of Ribosome maturation factor RimP from Clostridium botulinum (strain Loch Maree / Type A3).